The sequence spans 311 residues: tRNA-cytidine(32) 2-sulfurtransferase (311 aa).

A PP-loop motif motif is present at residues 47–52 (SGGKDS). [4Fe-4S] cluster-binding residues include Cys-122, Cys-125, and Cys-213.

The protein belongs to the TtcA family. In terms of assembly, homodimer. The cofactor is Mg(2+). [4Fe-4S] cluster is required as a cofactor.

The protein localises to the cytoplasm. The enzyme catalyses cytidine(32) in tRNA + S-sulfanyl-L-cysteinyl-[cysteine desulfurase] + AH2 + ATP = 2-thiocytidine(32) in tRNA + L-cysteinyl-[cysteine desulfurase] + A + AMP + diphosphate + H(+). The protein operates within tRNA modification. Its function is as follows. Catalyzes the ATP-dependent 2-thiolation of cytidine in position 32 of tRNA, to form 2-thiocytidine (s(2)C32). The sulfur atoms are provided by the cysteine/cysteine desulfurase (IscS) system. This is tRNA-cytidine(32) 2-sulfurtransferase from Escherichia coli O127:H6 (strain E2348/69 / EPEC).